Here is a 298-residue protein sequence, read N- to C-terminus: N-acetylmuramic acid 6-phosphate etherase (298 aa).

In terms of domain architecture, SIS spans 55 to 218 (IHAQVSGGGR…STGLMIKSGK (164 aa)). Catalysis depends on E83, which acts as the Proton donor. The active site involves E114.

This sequence belongs to the GCKR-like family. MurNAc-6-P etherase subfamily. As to quaternary structure, homodimer.

It carries out the reaction N-acetyl-D-muramate 6-phosphate + H2O = N-acetyl-D-glucosamine 6-phosphate + (R)-lactate. It functions in the pathway amino-sugar metabolism; 1,6-anhydro-N-acetylmuramate degradation. The protein operates within amino-sugar metabolism; N-acetylmuramate degradation. It participates in cell wall biogenesis; peptidoglycan recycling. In terms of biological role, specifically catalyzes the cleavage of the D-lactyl ether substituent of MurNAc 6-phosphate, producing GlcNAc 6-phosphate and D-lactate. Together with AnmK, is also required for the utilization of anhydro-N-acetylmuramic acid (anhMurNAc) either imported from the medium or derived from its own cell wall murein, and thus plays a role in cell wall recycling. This is N-acetylmuramic acid 6-phosphate etherase from Shigella flexneri serotype 5b (strain 8401).